The chain runs to 70 residues: Exodeoxyribonuclease 7 small subunit (70 aa).

The protein belongs to the XseB family. Heterooligomer composed of large and small subunits.

The protein localises to the cytoplasm. The enzyme catalyses Exonucleolytic cleavage in either 5'- to 3'- or 3'- to 5'-direction to yield nucleoside 5'-phosphates.. Functionally, bidirectionally degrades single-stranded DNA into large acid-insoluble oligonucleotides, which are then degraded further into small acid-soluble oligonucleotides. The protein is Exodeoxyribonuclease 7 small subunit of Streptococcus sanguinis (strain SK36).